A 383-amino-acid chain; its full sequence is Na(+)/H(+) antiporter NhaA (383 aa).

11 consecutive transmembrane segments (helical) span residues 10–30 (LIGG…NNSP), 56–76 (LMHW…GLEI), 91–111 (IITP…IYLS), 121–141 (GWAI…ALLG), 150–170 (LLVI…IAIF), 174–194 (SLSL…IICN), 206–226 (VVLG…ATLA), 254–274 (PWII…ISFS), 289–308 (IIWG…LAVF), 327–347 (GISL…VLAF), and 355–375 (AIKI…YIVL).

The protein belongs to the NhaA Na(+)/H(+) (TC 2.A.33) antiporter family.

Its subcellular location is the cell inner membrane. It catalyses the reaction Na(+)(in) + 2 H(+)(out) = Na(+)(out) + 2 H(+)(in). In terms of biological role, na(+)/H(+) antiporter that extrudes sodium in exchange for external protons. In Francisella tularensis subsp. tularensis (strain SCHU S4 / Schu 4), this protein is Na(+)/H(+) antiporter NhaA.